Here is a 439-residue protein sequence, read N- to C-terminus: Probable guanine deaminase (439 aa).

Residues histidine 76 and histidine 78 each contribute to the Zn(2+) site. Substrate-binding positions include 78-81 (HYPQ), 203-204 (RF), 231-234 (HINE), and aspartate 321. Positions 231 and 321 each coordinate Zn(2+).

This sequence belongs to the metallo-dependent hydrolases superfamily. ATZ/TRZ family. It depends on Zn(2+) as a cofactor.

It catalyses the reaction guanine + H2O + H(+) = xanthine + NH4(+). It participates in purine metabolism; guanine degradation; xanthine from guanine: step 1/1. Catalyzes the hydrolytic deamination of guanine, producing xanthine and ammonia. This is Probable guanine deaminase (guaD) from Deinococcus radiodurans (strain ATCC 13939 / DSM 20539 / JCM 16871 / CCUG 27074 / LMG 4051 / NBRC 15346 / NCIMB 9279 / VKM B-1422 / R1).